A 514-amino-acid polypeptide reads, in one-letter code: Putative fumarate hydratase class I (514 aa).

Residues Cys-62, Cys-187, and Cys-274 each coordinate [4Fe-4S] cluster.

It belongs to the class-I fumarase family. In terms of assembly, homodimer. It depends on [4Fe-4S] cluster as a cofactor.

The catalysed reaction is (S)-malate = fumarate + H2O. It participates in carbohydrate metabolism; tricarboxylic acid cycle; (S)-malate from fumarate: step 1/1. Functionally, catalyzes the reversible hydration of fumarate to (S)-malate. The sequence is that of Putative fumarate hydratase class I (fumA) from Geobacillus stearothermophilus (Bacillus stearothermophilus).